We begin with the raw amino-acid sequence, 1226 residues long: Methionine synthase (1226 aa).

A Hcy-binding domain is found at 6-326 (RAQIEAQLKQ…EHIRHMAMAV (321 aa)). Cys-248, Cys-311, and Cys-312 together coordinate Zn(2+). In terms of domain architecture, Pterin-binding spans 357-618 (FVNVGERTNV…VPEKLREAVE (262 aa)). In terms of domain architecture, B12-binding N-terminal spans 651–745 (SALEWRTWSV…FINASKQAGS (95 aa)). Residues Glu-695, 757–761 (GDVHD), His-760, Ser-805, Thr-809, and Ala-861 contribute to the methylcob(III)alamin site. A B12-binding domain is found at 747 to 882 (NGKILLATVK…SDELRPAFVE (136 aa)). Residues 898–1226 (KKPRTKPVTL…EKWLGPNING (329 aa)) enclose the AdoMet activation domain. S-adenosyl-L-methionine is bound by residues Asp-948, Arg-1136, and 1191–1192 (YF).

It belongs to the vitamin-B12 dependent methionine synthase family. It depends on methylcob(III)alamin as a cofactor. Requires Zn(2+) as cofactor.

The enzyme catalyses (6S)-5-methyl-5,6,7,8-tetrahydrofolate + L-homocysteine = (6S)-5,6,7,8-tetrahydrofolate + L-methionine. It participates in amino-acid biosynthesis; L-methionine biosynthesis via de novo pathway; L-methionine from L-homocysteine (MetH route): step 1/1. Its function is as follows. Catalyzes the transfer of a methyl group from methyl-cobalamin to homocysteine, yielding enzyme-bound cob(I)alamin and methionine. Subsequently, remethylates the cofactor using methyltetrahydrofolate. This is Methionine synthase (metH) from Vibrio vulnificus (strain CMCP6).